Reading from the N-terminus, the 632-residue chain is PWWP domain-containing protein 5 (632 aa).

The PWWP domain maps to 97–158 (DSDLVWAKLR…ASQIKPFHQN (62 aa)). The tract at residues 310–452 (RKTDYKDNAE…AERKISSPDE (143 aa)) is disordered. Basic and acidic residues-rich tracts occupy residues 313 to 326 (DYKD…EKTL), 339 to 364 (STEK…GKSE), 371 to 383 (QQKE…HSNE), and 425 to 449 (KSTE…KISS). Positions 352-359 (KRKVESSE) match the Nuclear localization signal motif.

Belongs to the PDP family. As to quaternary structure, component of the PRC2 (polycomb repressive complex 2) complex which regulates histone methylation on histone H3K27.

It localises to the nucleus. Functionally, may influence gene expression by regulating the function of the PRC2 complex and modulating H3K27me3 level. This chain is PWWP domain-containing protein 5, found in Arabidopsis thaliana (Mouse-ear cress).